A 172-amino-acid polypeptide reads, in one-letter code: Adenine phosphoribosyltransferase (172 aa).

Belongs to the purine/pyrimidine phosphoribosyltransferase family. In terms of assembly, homodimer.

Its subcellular location is the cytoplasm. The enzyme catalyses AMP + diphosphate = 5-phospho-alpha-D-ribose 1-diphosphate + adenine. Its pathway is purine metabolism; AMP biosynthesis via salvage pathway; AMP from adenine: step 1/1. Catalyzes a salvage reaction resulting in the formation of AMP, that is energically less costly than de novo synthesis. This chain is Adenine phosphoribosyltransferase, found in Clostridium novyi (strain NT).